Reading from the N-terminus, the 338-residue chain is Ketol-acid reductoisomerase (NADP(+)) (338 aa).

The KARI N-terminal Rossmann domain maps to 1 to 181 (MKVFYDKDCD…GGGKGGIIET (181 aa)). NADP(+) contacts are provided by residues 24–27 (YGSQ), R47, and S52. H107 is a catalytic residue. G133 is a binding site for NADP(+). One can recognise a KARI C-terminal knotted domain in the interval 182-327 (NFKEETETDL…GQLRAMMPWI (146 aa)). The Mg(2+) site is built by D190, E194, E226, and E230. S251 is a binding site for substrate.

Belongs to the ketol-acid reductoisomerase family. Mg(2+) is required as a cofactor.

It carries out the reaction (2R)-2,3-dihydroxy-3-methylbutanoate + NADP(+) = (2S)-2-acetolactate + NADPH + H(+). The enzyme catalyses (2R,3R)-2,3-dihydroxy-3-methylpentanoate + NADP(+) = (S)-2-ethyl-2-hydroxy-3-oxobutanoate + NADPH + H(+). It functions in the pathway amino-acid biosynthesis; L-isoleucine biosynthesis; L-isoleucine from 2-oxobutanoate: step 2/4. It participates in amino-acid biosynthesis; L-valine biosynthesis; L-valine from pyruvate: step 2/4. Functionally, involved in the biosynthesis of branched-chain amino acids (BCAA). Catalyzes an alkyl-migration followed by a ketol-acid reduction of (S)-2-acetolactate (S2AL) to yield (R)-2,3-dihydroxy-isovalerate. In the isomerase reaction, S2AL is rearranged via a Mg-dependent methyl migration to produce 3-hydroxy-3-methyl-2-ketobutyrate (HMKB). In the reductase reaction, this 2-ketoacid undergoes a metal-dependent reduction by NADPH to yield (R)-2,3-dihydroxy-isovalerate. This is Ketol-acid reductoisomerase (NADP(+)) from Delftia acidovorans (strain DSM 14801 / SPH-1).